The sequence spans 1177 residues: Dynein axonemal assembly factor 9 (1177 aa).

A disordered region spans residues 1 to 27; that stretch reads MDVYPPRRQGLPRARSPGGSSRGSPSV. Residues 11-27 are compositionally biased toward low complexity; it reads LPRARSPGGSSRGSPSV.

As to quaternary structure, interacts with ARL3.

Its function is as follows. May act as an effector for ARL3. The polypeptide is Dynein axonemal assembly factor 9 (Homo sapiens (Human)).